Here is a 359-residue protein sequence, read N- to C-terminus: Putative transposase y4uE (359 aa).

Disordered stretches follow at residues 1–31 and 318–359; these read MGDG…APGG and HYAH…EEAA.

This sequence belongs to the transposase 9 family.

The protein is Putative transposase y4uE of Sinorhizobium fredii (strain NBRC 101917 / NGR234).